The primary structure comprises 268 residues: Phosphatidylglycerol--prolipoprotein diacylglyceryl transferase (268 aa).

3 helical membrane-spanning segments follow: residues 25-45, 57-77, and 93-113; these read WYGV…TKVF, YLFY…HCFF, and VWHG…AVYF. Arg142 contacts a 1,2-diacyl-sn-glycero-3-phospho-(1'-sn-glycerol). The next 4 helical transmembrane spans lie at 151–171, 175–195, 204–224, and 236–256; these read IIGI…DLLP, VQLY…LAYW, GLLL…LEFF, and PLSV…LLIF.

Belongs to the Lgt family.

Its subcellular location is the cell inner membrane. It carries out the reaction L-cysteinyl-[prolipoprotein] + a 1,2-diacyl-sn-glycero-3-phospho-(1'-sn-glycerol) = an S-1,2-diacyl-sn-glyceryl-L-cysteinyl-[prolipoprotein] + sn-glycerol 1-phosphate + H(+). The protein operates within protein modification; lipoprotein biosynthesis (diacylglyceryl transfer). Its function is as follows. Catalyzes the transfer of the diacylglyceryl group from phosphatidylglycerol to the sulfhydryl group of the N-terminal cysteine of a prolipoprotein, the first step in the formation of mature lipoproteins. The chain is Phosphatidylglycerol--prolipoprotein diacylglyceryl transferase from Chloroherpeton thalassium (strain ATCC 35110 / GB-78).